The primary structure comprises 271 residues: Ribose-phosphate pyrophosphokinase 2 (271 aa).

Residues 34–36 (DGE) and 82–83 (RQ) each bind ATP. 2 residues coordinate Mg(2+): H115 and D150. The active site involves K173. D-ribose 5-phosphate contacts are provided by residues R175, D199, and 203-207 (STGGT).

It belongs to the ribose-phosphate pyrophosphokinase family. Class III (archaeal) subfamily. The cofactor is Mg(2+).

It is found in the cytoplasm. It carries out the reaction D-ribose 5-phosphate + ATP = 5-phospho-alpha-D-ribose 1-diphosphate + AMP + H(+). It participates in metabolic intermediate biosynthesis; 5-phospho-alpha-D-ribose 1-diphosphate biosynthesis; 5-phospho-alpha-D-ribose 1-diphosphate from D-ribose 5-phosphate (route I): step 1/1. In terms of biological role, involved in the biosynthesis of the central metabolite phospho-alpha-D-ribosyl-1-pyrophosphate (PRPP) via the transfer of pyrophosphoryl group from ATP to 1-hydroxyl of ribose-5-phosphate (Rib-5-P). This Archaeoglobus fulgidus (strain ATCC 49558 / DSM 4304 / JCM 9628 / NBRC 100126 / VC-16) protein is Ribose-phosphate pyrophosphokinase 2.